The following is a 117-amino-acid chain: Hydrogenase maturation factor HypA (117 aa).

His-2 contributes to the Ni(2+) binding site. Positions 73, 76, 89, and 92 each coordinate Zn(2+).

This sequence belongs to the HypA/HybF family.

Functionally, involved in the maturation of [NiFe] hydrogenases. Required for nickel insertion into the metal center of the hydrogenase. The polypeptide is Hydrogenase maturation factor HypA (Shewanella baltica (strain OS185)).